The sequence spans 110 residues: MAHATPPSALEQGGPIRVEHDRQRRQFSVRLNGCHDRAVLLYEYVGKRIVDLQHTEVPDAYRGRGIAKHLAKAALDFVVEEDLKAHLTCWYIQKYVKENPLPQYLERLQP.

One can recognise an N-acetyltransferase domain in the interval 19–109 (EHDRQRRQFS…PLPQYLERLQ (91 aa)).

It belongs to the NATD1 family. As to expression, expressed in the heart, testis, kidney and lung.

The sequence is that of Protein NATD1 (Natd1) from Mus musculus (Mouse).